Consider the following 910-residue polypeptide: Periodic tryptophan protein 2 homolog (910 aa).

WD repeat units lie at residues 12-50, 53-92, 94-134, 144-183, 188-227, 271-310, 313-355, 358-397, 400-439, 443-485, 486-523, 525-563, 586-625, and 688-728; these read GTVY…SKTL, DCNY…KIYT, RSNK…KVYN, LSSD…NLFI, SHKG…GELV, GKSV…LVHN, VSEM…YVMK, AHSL…CTVT, EHTS…NFRT, PEPT…DILS, GHES…AETV, VSHE…NLGS, AKTK…ILKK, and RPEV…DPFQ. The disordered stretch occupies residues 867–910; the sequence is SKKSVKKEEEEEEDVSDESDDEDIEDESAGSDDEDSDDSVEIIE. The span at 875–910 shows a compositional bias: acidic residues; it reads EEEEEDVSDESDDEDIEDESAGSDDEDSDDSVEIIE.

This sequence belongs to the WD repeat PWP2 family.

The protein is Periodic tryptophan protein 2 homolog of Caenorhabditis elegans.